The chain runs to 759 residues: Zinc finger protein 287 (759 aa).

Residues 42–124 form the SCAN box domain; it reads RRNFRNFPYP…ALVEDLTQIL (83 aa). A disordered region spans residues 127–154; the sequence is EEAPQSSALPQDTPEDDPNHDPNPASQA. Positions 166 to 234 constitute a KRAB domain; the sequence is VTFNDVAVDI…IKEIVEGPNP (69 aa). 14 consecutive C2H2-type zinc fingers follow at residues 366-388, 394-416, 422-444, 450-472, 478-500, 506-528, 534-556, 562-584, 590-612, 618-640, 646-668, 674-696, 702-724, and 730-752; these read YSCNVCGKQFRKYPSLLAHRENH, YECEECGKEFKHLSSLIAHQRMH, YECHQCGKAFSQRAHLTIHQRIH, YKCEDCGKDFSQRAHLTIHQRTH, YKCLECSKTFSHSSSLINHQRVH, YICNECGKTFSQSTHLLQHQKIH, YKCNECWKVFSQSTYLIRHQRIH, YKCTACGKAFAHSSTLIQHQTTH, YICNVCGKAFSQSANLTQHHRTH, YKCSVCGKAFSQSVHLTQHQRIH, FKCNTCGKAYRQGANLTQHQRVH, YKCHHCGKAFIYSSSLNQHRRTH, YKCSHCNKDFSQRTCLIQHQRIH, and YGCRICGKAFTQSTNLIQHQRVH.

Belongs to the krueppel C2H2-type zinc-finger protein family. Expressed in brain and at low levels in kidney and spleen and few hematopoietic cell lines.

The protein localises to the nucleus. Its function is as follows. May be involved in transcriptional regulation. The protein is Zinc finger protein 287 of Mus musculus (Mouse).